A 353-amino-acid polypeptide reads, in one-letter code: Photosystem II protein D1 (353 aa).

An N-acetylthreonine modification is found at T2. The residue at position 2 (T2) is a Phosphothreonine. Transmembrane regions (helical) follow at residues 29 to 46, 118 to 133, and 142 to 156; these read NIGWFGVLMIPTLLTATS, HFLLGVACYMGREWEL, and WIAVAYSAPVAAATA. H118 lines the chlorophyll a pocket. Y126 is a pheophytin a binding site. [CaMn4O5] cluster contacts are provided by D170 and E189. The helical transmembrane segment at 197–218 threads the bilayer; the sequence is FHMLGVAGVFGGSLFSAMHGSL. Position 198 (H198) interacts with chlorophyll a. A quinone-binding positions include H215 and 264-265; that span reads SF. H215 is a Fe cation binding site. H272 contacts Fe cation. A helical membrane pass occupies residues 274 to 288; sequence FLAAWPVVGIWFTAL. [CaMn4O5] cluster-binding residues include H332, E333, D342, and A344. The propeptide occupies 345 to 353; that stretch reads AVEAPAVNG.

Belongs to the reaction center PufL/M/PsbA/D family. As to quaternary structure, PSII is composed of 1 copy each of membrane proteins PsbA, PsbB, PsbC, PsbD, PsbE, PsbF, PsbH, PsbI, PsbJ, PsbK, PsbL, PsbM, PsbT, PsbX, PsbY, PsbZ, Psb30/Ycf12, at least 3 peripheral proteins of the oxygen-evolving complex and a large number of cofactors. It forms dimeric complexes. The D1/D2 heterodimer binds P680, chlorophylls that are the primary electron donor of PSII, and subsequent electron acceptors. It shares a non-heme iron and each subunit binds pheophytin, quinone, additional chlorophylls, carotenoids and lipids. D1 provides most of the ligands for the Mn4-Ca-O5 cluster of the oxygen-evolving complex (OEC). There is also a Cl(-1) ion associated with D1 and D2, which is required for oxygen evolution. The PSII complex binds additional chlorophylls, carotenoids and specific lipids. serves as cofactor. In terms of processing, tyr-161 forms a radical intermediate that is referred to as redox-active TyrZ, YZ or Y-Z. C-terminally processed by CTPA; processing is essential to allow assembly of the oxygen-evolving complex and thus photosynthetic growth.

The protein resides in the plastid. It localises to the chloroplast thylakoid membrane. It carries out the reaction 2 a plastoquinone + 4 hnu + 2 H2O = 2 a plastoquinol + O2. Functionally, photosystem II (PSII) is a light-driven water:plastoquinone oxidoreductase that uses light energy to abstract electrons from H(2)O, generating O(2) and a proton gradient subsequently used for ATP formation. It consists of a core antenna complex that captures photons, and an electron transfer chain that converts photonic excitation into a charge separation. The D1/D2 (PsbA/PsbD) reaction center heterodimer binds P680, the primary electron donor of PSII as well as several subsequent electron acceptors. The polypeptide is Photosystem II protein D1 (Dumortiera hirsuta (Liverwort)).